A 207-amino-acid chain; its full sequence is Glycerol-3-phosphate acyltransferase (207 aa).

The next 5 membrane-spanning stretches (helical) occupy residues 4-24, 58-78, 86-106, 120-140, and 162-182; these read VVAT…SFAV, ILTL…AQLL, DMGI…PVFH, ILLA…LIIA, and VLLF…VLLI.

The protein belongs to the PlsY family. Probably interacts with PlsX.

The protein resides in the cell inner membrane. It carries out the reaction an acyl phosphate + sn-glycerol 3-phosphate = a 1-acyl-sn-glycero-3-phosphate + phosphate. The protein operates within lipid metabolism; phospholipid metabolism. Functionally, catalyzes the transfer of an acyl group from acyl-phosphate (acyl-PO(4)) to glycerol-3-phosphate (G3P) to form lysophosphatidic acid (LPA). This enzyme utilizes acyl-phosphate as fatty acyl donor, but not acyl-CoA or acyl-ACP. This Ralstonia nicotianae (strain ATCC BAA-1114 / GMI1000) (Ralstonia solanacearum) protein is Glycerol-3-phosphate acyltransferase.